The chain runs to 196 residues: Potassium-transporting ATPase KdpC subunit (196 aa).

A helical membrane pass occupies residues 7-27 (PAIVSAGLFTVLLGLAYPLAV).

This sequence belongs to the KdpC family. The system is composed of three essential subunits: KdpA, KdpB and KdpC.

Its subcellular location is the cell inner membrane. Part of the high-affinity ATP-driven potassium transport (or Kdp) system, which catalyzes the hydrolysis of ATP coupled with the electrogenic transport of potassium into the cytoplasm. This subunit acts as a catalytic chaperone that increases the ATP-binding affinity of the ATP-hydrolyzing subunit KdpB by the formation of a transient KdpB/KdpC/ATP ternary complex. This chain is Potassium-transporting ATPase KdpC subunit, found in Caulobacter sp. (strain K31).